Consider the following 450-residue polypeptide: Tubulin alpha-1 chain (450 aa).

Residues Gln11, Glu71, Gly144, Thr145, Thr179, Asn206, and Asn228 each coordinate GTP. Mg(2+) is bound at residue Glu71. Glu254 is an active-site residue.

The protein belongs to the tubulin family. As to quaternary structure, dimer of alpha and beta chains. A typical microtubule is a hollow water-filled tube with an outer diameter of 25 nm and an inner diameter of 15 nM. Alpha-beta heterodimers associate head-to-tail to form protofilaments running lengthwise along the microtubule wall with the beta-tubulin subunit facing the microtubule plus end conferring a structural polarity. Microtubules usually have 13 protofilaments but different protofilament numbers can be found in some organisms and specialized cells. Requires Mg(2+) as cofactor. In terms of processing, undergoes a tyrosination/detyrosination cycle, the cyclic removal and re-addition of a C-terminal tyrosine residue by the enzymes tubulin tyrosine carboxypeptidase (TTCP) and tubulin tyrosine ligase (TTL), respectively.

The protein resides in the cytoplasm. Its subcellular location is the cytoskeleton. The catalysed reaction is GTP + H2O = GDP + phosphate + H(+). Its function is as follows. Tubulin is the major constituent of microtubules, a cylinder consisting of laterally associated linear protofilaments composed of alpha- and beta-tubulin heterodimers. Microtubules grow by the addition of GTP-tubulin dimers to the microtubule end, where a stabilizing cap forms. Below the cap, tubulin dimers are in GDP-bound state, owing to GTPase activity of alpha-tubulin. This chain is Tubulin alpha-1 chain (TUBA1), found in Hordeum vulgare (Barley).